The following is a 213-amino-acid chain: Serine acetyltransferase (213 aa).

It belongs to the transferase hexapeptide repeat family.

It localises to the cytoplasm. It catalyses the reaction L-serine + acetyl-CoA = O-acetyl-L-serine + CoA. The protein operates within amino-acid biosynthesis; L-cysteine biosynthesis; L-cysteine from L-serine: step 1/2. The chain is Serine acetyltransferase (cysE) from Staphylococcus epidermidis (strain ATCC 35984 / DSM 28319 / BCRC 17069 / CCUG 31568 / BM 3577 / RP62A).